Reading from the N-terminus, the 139-residue chain is Putative nickel-responsive regulator (139 aa).

Residues His79, His90, His92, and Cys98 each contribute to the Ni(2+) site.

It belongs to the transcriptional regulatory CopG/NikR family. The cofactor is Ni(2+).

Its function is as follows. Transcriptional regulator. The polypeptide is Putative nickel-responsive regulator (Anaeromyxobacter dehalogenans (strain 2CP-C)).